Consider the following 657-residue polypeptide: Trifunctional protein RibF/MnmA (657 aa).

The tract at residues 1–141 is FMN adenylyltransferase; the sequence is MLSIINLTSK…VVKKDHCSTS (141 aa). Positions 158 to 282 are riboflavin kinase; sequence LLLTPFYLKG…DKKAALSFFH (125 aa). Residues 283 to 657 are tRNA-specific 2-thiouridylase MnmA; the sequence is KQEKPKVVVA…GGGKITKIIK (375 aa). ATP-binding positions include 292–299 and methionine 318; that span reads ALSGGVDS. The segment at 389–391 is interaction with target base in tRNA; it reads NPD. The active-site Nucleophile is cysteine 394. An intrachain disulfide couples cysteine 394 to cysteine 492. Residue glycine 420 coordinates ATP. Residues 442-444 form an interaction with tRNA region; it reads KDQ. The Cysteine persulfide intermediate role is filled by cysteine 492.

In the N-terminal section; belongs to the RibF family. It in the C-terminal section; belongs to the MnmA/TRMU family.

Its subcellular location is the cytoplasm. The enzyme catalyses riboflavin + ATP = FMN + ADP + H(+). It catalyses the reaction FMN + ATP + H(+) = FAD + diphosphate. The catalysed reaction is S-sulfanyl-L-cysteinyl-[protein] + uridine(34) in tRNA + AH2 + ATP = 2-thiouridine(34) in tRNA + L-cysteinyl-[protein] + A + AMP + diphosphate + H(+). It participates in cofactor biosynthesis; FAD biosynthesis; FAD from FMN: step 1/1. Its pathway is cofactor biosynthesis; FMN biosynthesis; FMN from riboflavin (ATP route): step 1/1. In terms of biological role, involved in FAD and FMN biosynthesis. Functionally, catalyzes the 2-thiolation of uridine at the wobble position (U34) of tRNA, leading to the formation of s(2)U34. This chain is Trifunctional protein RibF/MnmA (ribF/mnmA), found in Mycoplasmoides gallisepticum (strain R(low / passage 15 / clone 2)) (Mycoplasma gallisepticum).